The sequence spans 155 residues: WPP domain-containing protein 1 (155 aa).

Disordered stretches follow at residues 1–41 (MAET…VTIS) and 124–155 (SVKA…SSEA). Over residues 7–39 (ESITTSSPPPISETENSTTLPTTETEKNPNPVT) the composition is skewed to low complexity. The segment at 28 to 131 (TTETEKNPNP…LESVKAKSNV (104 aa)) is WPP. The segment covering 146–155 (VDSKIDSSEA) has biased composition (basic and acidic residues).

As to quaternary structure, binds to FPP proteins. Interacts with WAP, WIP1, WIP2 and WIP3 through its WPP domain. Interacts with HSP70-1, HSP70-3 and WIT1. Component of a ternary complex composed of WPP1, HSP70-1 and WIT1. Expressed in roots, stems and leaves.

The protein resides in the nucleus envelope. The protein localises to the cytoplasm. It localises to the nucleus. It is found in the golgi apparatus. Its subcellular location is the nucleus matrix. Regulates the mitotic activity in roots. Plays a role with HSP70-1 in facilitating WIT1 nuclear envelope targeting. The protein is WPP domain-containing protein 1 (WPP1) of Arabidopsis thaliana (Mouse-ear cress).